The chain runs to 425 residues: Adenylosuccinate synthetase (425 aa).

Residues G12–K18 and G40–T42 contribute to the GTP site. D13 serves as the catalytic Proton acceptor. Residues D13 and G40 each coordinate Mg(2+). IMP contacts are provided by residues D13 to K16, N38 to H41, T129, R143, N221, T236, and R300. H41 acts as the Proton donor in catalysis. V296 to R302 is a binding site for substrate. Residues R302, K328–D330, and G410–G412 each bind GTP.

It belongs to the adenylosuccinate synthetase family. In terms of assembly, homodimer. Mg(2+) serves as cofactor.

The protein localises to the cytoplasm. It carries out the reaction IMP + L-aspartate + GTP = N(6)-(1,2-dicarboxyethyl)-AMP + GDP + phosphate + 2 H(+). It functions in the pathway purine metabolism; AMP biosynthesis via de novo pathway; AMP from IMP: step 1/2. Plays an important role in the de novo pathway and in the salvage pathway of purine nucleotide biosynthesis. Catalyzes the first committed step in the biosynthesis of AMP from IMP. This is Adenylosuccinate synthetase from Phaeosphaeria nodorum (strain SN15 / ATCC MYA-4574 / FGSC 10173) (Glume blotch fungus).